Reading from the N-terminus, the 304-residue chain is Phospholipase A1 (304 aa).

A disulfide bridge links C6 with C90. N-linked (GlcNAc...) asparagine glycosylation occurs at N61. S140 functions as the Nucleophile in the catalytic mechanism. D168 serves as the catalytic Charge relay system. 2 cysteine pairs are disulfide-bonded: C179-C184 and C222-C231. The Charge relay system role is filled by H233. Cystine bridges form between C248–C272, C249–C297, and C265–C270.

The protein belongs to the AB hydrolase superfamily. Lipase family. As to expression, expressed by the venom gland.

The protein localises to the secreted. It carries out the reaction a 1,2-diacyl-sn-glycero-3-phosphocholine + H2O = a 2-acyl-sn-glycero-3-phosphocholine + a fatty acid + H(+). Its function is as follows. Catalyzes the hydrolysis of phosphatidylcholine with phospholipase A1 activity. May act as an allergen and induce hemolytic activity. The protein is Phospholipase A1 of Vespa velutina (Asian yellow-legged hornet).